Reading from the N-terminus, the 528-residue chain is Putative galacturonosyltransferase 2 (528 aa).

It belongs to the glycosyltransferase 8 family.

The protein operates within glycan metabolism; pectin biosynthesis. May be involved in pectin and/or xylans biosynthesis in cell walls. This chain is Putative galacturonosyltransferase 2 (GAUT2), found in Arabidopsis thaliana (Mouse-ear cress).